We begin with the raw amino-acid sequence, 341 residues long: Cyanuric acid amidohydrolase (341 aa).

The RU A stretch occupies residues Met1–Gly90. Substrate contacts are provided by residues Arg51 and Ser71 to Gly72. Positions Gly95 to Ser229 are RU B. Residue Lys144 is part of the active site. Residues Arg176 and Ser212–Ser213 contribute to the substrate site. Ser212 (nucleophile) is an active-site residue. The interval Leu235–Ile341 is RU C. Glu273 serves as a coordination point for Mg(2+). Substrate contacts are provided by residues Arg300 and Ser319–Gly320. 5 residues coordinate Mg(2+): Ala322, Gln325, Gly326, Pro327, and Gly330.

Belongs to the cyclic amide hydrolase (CyAH) family. Homotetramer.

It catalyses the reaction cyanurate + H2O = 1-carboxybiuret + H(+). Its pathway is xenobiotic degradation; atrazine degradation; biuret from cyanurate: step 1/1. Inhibited by barbituric acid. Functionally, responsible for the hydrolysis of cyanuric acid, an intermediate formed during catabolism of s-triazine based compounds in herbicides such as atrazine and polymers such as melamine. Catalyzes the hydrolytic opening of the s-triazine ring of cyanuric acid (2,4,6-trihydroxy-s-triazine) to yield carbon dioxide and carboxybiuret, which spontaneously decarboxylates to biuret. Only active on cyanuric acid and N-methylisocyanuric acid. The sequence is that of Cyanuric acid amidohydrolase from Sarocladium sp.